The following is a 316-amino-acid chain: Acetaldehyde dehydrogenase (316 aa).

11 to 14 (SGNI) contributes to the NAD(+) binding site. Catalysis depends on cysteine 131, which acts as the Acyl-thioester intermediate. NAD(+) contacts are provided by residues 162–170 (SAGPGTRAN) and asparagine 289.

This sequence belongs to the acetaldehyde dehydrogenase family. Interacts with MhpE.

It carries out the reaction acetaldehyde + NAD(+) + CoA = acetyl-CoA + NADH + H(+). It participates in aromatic compound metabolism; 3-phenylpropanoate degradation. In terms of biological role, catalyzes the conversion of acetaldehyde to acetyl-CoA, using NAD(+) and coenzyme A. Is the final enzyme in the meta-cleavage pathway for the degradation of aromatic compounds. This chain is Acetaldehyde dehydrogenase, found in Escherichia coli O81 (strain ED1a).